A 94-amino-acid chain; its full sequence is Co-chaperonin GroES (94 aa).

Belongs to the GroES chaperonin family. In terms of assembly, heptamer of 7 subunits arranged in a ring. Interacts with the chaperonin GroEL.

The protein localises to the cytoplasm. Its function is as follows. Together with the chaperonin GroEL, plays an essential role in assisting protein folding. The GroEL-GroES system forms a nano-cage that allows encapsulation of the non-native substrate proteins and provides a physical environment optimized to promote and accelerate protein folding. GroES binds to the apical surface of the GroEL ring, thereby capping the opening of the GroEL channel. This chain is Co-chaperonin GroES, found in Streptococcus pneumoniae (strain Taiwan19F-14).